A 1066-amino-acid polypeptide reads, in one-letter code: E3 ubiquitin-protein ligase PDZRN3 (1066 aa).

The RING-type; degenerate zinc finger occupies 18 to 56 (CALCHKVLEDPLTTPCGHVFCAGCVLPWVVQEGSCPARC). A TRAF-type zinc finger spans residues 100 to 158 (EHLERCDFAPARCRHAGCGQVLLRRDVEAHMRDACDARPVGRCQEGCGLPLTHGEQRAG). PDZ domains are found at residues 249–339 (TLVL…LRRT) and 419–503 (EVDL…IARP). A Phosphoserine modification is found at Ser-427. The interval 545 to 603 (QKKHDEDGGTTDTATILSNQHEKDSGVGRTDESTRNDESSEQENNGDDATASSNPLAGQ) is disordered. The span at 554–563 (TTDTATILSN) shows a compositional bias: polar residues. The span at 564–582 (QHEKDSGVGRTDESTRNDE) shows a compositional bias: basic and acidic residues. Positions 594-603 (TASSNPLAGQ) are enriched in polar residues. Residues 679-704 (ESVDKELELLNEELRSIELECLSIVR) are a coiled coil. Over residues 744–754 (TELPEKSDKDS) the composition is skewed to basic and acidic residues. Disordered stretches follow at residues 744-778 (TELP…PDNS) and 808-863 (LLSI…LPSY). 2 stretches are compositionally biased toward polar residues: residues 755-769 (SSAY…STPL) and 845-855 (GSRSPTPSQKL). The stretch at 975–1025 (KEERKQHLVKAKEQRRRREFMMQSRLDCLKEQQAADDRKEMNILELSHKKM) forms a coiled coil.

As to quaternary structure, interacts with NLGN1 and EFNB2. Interacts with UBE2D2 and with MUSK via the first PDZ domain. In terms of processing, auto-ubiquitinated. As to expression, widely expressed, including in the heart, skeletal muscle and liver and, at lower levels, in the brain, colon, small intestine, placenta and lung. Down-regulated in ovarian serous papillary tumors.

The protein resides in the synapse. It is found in the cytoplasm. It catalyses the reaction S-ubiquitinyl-[E2 ubiquitin-conjugating enzyme]-L-cysteine + [acceptor protein]-L-lysine = [E2 ubiquitin-conjugating enzyme]-L-cysteine + N(6)-ubiquitinyl-[acceptor protein]-L-lysine.. Its pathway is protein modification; protein ubiquitination. E3 ubiquitin-protein ligase. Plays an important role in regulating the surface level of MUSK on myotubes. Mediates the ubiquitination of MUSK, promoting its endocytosis and lysosomal degradation. Might contribute to terminal myogenic differentiation. The protein is E3 ubiquitin-protein ligase PDZRN3 (PDZRN3) of Homo sapiens (Human).